A 187-amino-acid chain; its full sequence is Adenylate kinase (187 aa).

An ATP-binding site is contributed by 10–15 (GSGKGT). Residues 30 to 59 (STGDMLRAEIAAGTELGKQAKTVMDAGNLV) form an NMP region. Residues threonine 31, arginine 36, 57 to 59 (NLV), 85 to 88 (GYPR), and glutamine 92 each bind AMP. Residues 126–136 (GRAKEQGRADD) form an LID region. Residue arginine 127 coordinates ATP. Arginine 133 and arginine 144 together coordinate AMP. Position 172 (glycine 172) interacts with ATP.

This sequence belongs to the adenylate kinase family. In terms of assembly, monomer.

The protein resides in the cytoplasm. The enzyme catalyses AMP + ATP = 2 ADP. It participates in purine metabolism; AMP biosynthesis via salvage pathway; AMP from ADP: step 1/1. In terms of biological role, catalyzes the reversible transfer of the terminal phosphate group between ATP and AMP. Plays an important role in cellular energy homeostasis and in adenine nucleotide metabolism. The chain is Adenylate kinase from Stenotrophomonas maltophilia (strain K279a).